Reading from the N-terminus, the 427-residue chain is 3-phosphoshikimate 1-carboxyvinyltransferase (427 aa).

Residues Lys20, Ser21, and Arg25 each contribute to the 3-phosphoshikimate site. A phosphoenolpyruvate-binding site is contributed by Lys20. Positions 92 and 120 each coordinate phosphoenolpyruvate. 4 residues coordinate 3-phosphoshikimate: Ser166, Gln168, Asp312, and Lys339. Gln168 lines the phosphoenolpyruvate pocket. Asp312 acts as the Proton acceptor in catalysis. The phosphoenolpyruvate site is built by Arg343 and Arg385.

This sequence belongs to the EPSP synthase family. In terms of assembly, monomer.

The protein resides in the cytoplasm. It catalyses the reaction 3-phosphoshikimate + phosphoenolpyruvate = 5-O-(1-carboxyvinyl)-3-phosphoshikimate + phosphate. It participates in metabolic intermediate biosynthesis; chorismate biosynthesis; chorismate from D-erythrose 4-phosphate and phosphoenolpyruvate: step 6/7. Its function is as follows. Catalyzes the transfer of the enolpyruvyl moiety of phosphoenolpyruvate (PEP) to the 5-hydroxyl of shikimate-3-phosphate (S3P) to produce enolpyruvyl shikimate-3-phosphate and inorganic phosphate. The sequence is that of 3-phosphoshikimate 1-carboxyvinyltransferase from Streptococcus equi subsp. equi (strain 4047).